Here is a 338-residue protein sequence, read N- to C-terminus: NADPH dehydrogenase (338 aa).

22–25 (SPMC) lines the FMN pocket. Tyr27 is a substrate binding site. Residues Ala59 and Gln101 each contribute to the FMN site. A substrate-binding site is contributed by 163 to 166 (HAAH). FMN-binding positions include Arg214 and 306 to 307 (GR).

This sequence belongs to the NADH:flavin oxidoreductase/NADH oxidase family. NamA subfamily. Homotetramer. The cofactor is FMN.

The catalysed reaction is A + NADPH + H(+) = AH2 + NADP(+). Its function is as follows. Catalyzes the reduction of the double bond of an array of alpha,beta-unsaturated aldehydes and ketones. It also reduces the nitro group of nitroester and nitroaromatic compounds. It could have a role in detoxification processes. This is NADPH dehydrogenase from Listeria innocua serovar 6a (strain ATCC BAA-680 / CLIP 11262).